The following is a 148-amino-acid chain: Putative nickel-responsive regulator (148 aa).

Ni(2+)-binding residues include His-88, His-99, His-101, and Cys-107.

This sequence belongs to the transcriptional regulatory CopG/NikR family. Homotetramer. Ni(2+) serves as cofactor.

In terms of biological role, transcriptional regulator. The polypeptide is Putative nickel-responsive regulator (Helicobacter pylori (strain ATCC 700392 / 26695) (Campylobacter pylori)).